The sequence spans 357 residues: Glutamate 5-kinase (357 aa).

K7 provides a ligand contact to ATP. Positions 43, 130, and 142 each coordinate substrate. ATP-binding positions include T162–D163 and T205–K211. The region spanning E270 to V353 is the PUA domain.

The protein belongs to the glutamate 5-kinase family.

The protein localises to the cytoplasm. It catalyses the reaction L-glutamate + ATP = L-glutamyl 5-phosphate + ADP. It functions in the pathway amino-acid biosynthesis; L-proline biosynthesis; L-glutamate 5-semialdehyde from L-glutamate: step 1/2. Functionally, catalyzes the transfer of a phosphate group to glutamate to form L-glutamate 5-phosphate. The polypeptide is Glutamate 5-kinase (Synechococcus sp. (strain CC9605)).